Consider the following 259-residue polypeptide: S-methyl-5'-thioadenosine phosphorylase (259 aa).

Phosphate-binding positions include serine 9 and arginine 50 to histidine 51. Methionine 175 lines the substrate pocket. Position 176 (threonine 176) interacts with phosphate. Position 199-201 (aspartate 199–aspartate 201) interacts with substrate.

Belongs to the PNP/MTAP phosphorylase family. MTAP subfamily. As to quaternary structure, homohexamer. Dimer of a homotrimer.

The catalysed reaction is S-methyl-5'-thioadenosine + phosphate = 5-(methylsulfanyl)-alpha-D-ribose 1-phosphate + adenine. It participates in amino-acid biosynthesis; L-methionine biosynthesis via salvage pathway; S-methyl-5-thio-alpha-D-ribose 1-phosphate from S-methyl-5'-thioadenosine (phosphorylase route): step 1/1. Catalyzes the reversible phosphorylation of S-methyl-5'-thioadenosine (MTA) to adenine and 5-methylthioribose-1-phosphate. Involved in the breakdown of MTA, a major by-product of polyamine biosynthesis. Responsible for the first step in the methionine salvage pathway after MTA has been generated from S-adenosylmethionine. Has broad substrate specificity with 6-aminopurine nucleosides as preferred substrates. The polypeptide is S-methyl-5'-thioadenosine phosphorylase (Mycolicibacterium smegmatis (strain ATCC 700084 / mc(2)155) (Mycobacterium smegmatis)).